The chain runs to 372 residues: Virion morphogenesis protein OPG132 (372 aa).

Belongs to the orthopoxvirus OPG132 family.

It is found in the host cytoplasm. Its subcellular location is the virion. Functionally, lipid-bound viral membrane assembly protein that plays an essential role in immature virion (IV) to mature virion (MV) transition. Functions in both crescent-shaped viral membranes formation and its enclosure to form immature virions. In addition, participates in targeting mature virion proteins to sites of virion assembly to ensure their correct localization. The chain is Virion morphogenesis protein OPG132 (OPG132) from Monkeypox virus.